Reading from the N-terminus, the 1531-residue chain is Myosin-17 (1531 aa).

Residues 8–57 (IVGSHVWIEDPGAAWIDGEVVKINGEEVHAHTTNGKTVVANIANVFPKDT) form the Myosin N-terminal SH3-like domain. The Myosin motor domain maps to 62-732 (GGVDDMTKLS…QMAELDARRA (671 aa)). ATP contacts are provided by residues 156 to 163 (GESGAGKT) and 209 to 217 (NNNSSRFGK). 4 actin-binding regions span residues 495–529 (LIEKKPGGVIALLDEACMFPKSTHETFAQKLYQTF), 531–554 (NYKRFTKPKLSRTSFAISHYAGEV), 589–613 (FPRLPEETSSKTKFSSIGSRFKLQL), and 613–635 (LQSLMETLSSTEPHYIRCVKPNN). IQ domains lie at 758–787 (LRGAAIVLQSNCRGKLACNLYEEMRRQAAA), 783–812 (RQAAAVKIQKIFRRHIARESYLRIRHSTIT), 806–835 (IRHSTITVQTALRGMVARNEFRFRKQMKAA), 831–860 (QMKAATIIQARLRSHLTHSYYKQLQKAALS), and 854–883 (LQKAALSTQCGWRSRVARKELRTLKMAARD). Positions 884 to 1056 (TGALREAKDK…VLRQQALAIS (173 aa)) form a coiled coil. The interval 1071–1090 (LPRTPENGNYLNGGTKTTPD) is disordered. Over residues 1076-1090 (ENGNYLNGGTKTTPD) the composition is skewed to polar residues. The Dilute domain maps to 1159-1470 (DRIIQTIATA…IANMRVMMTE (312 aa)). Ser-1517 carries the post-translational modification Phosphoserine.

This sequence belongs to the TRAFAC class myosin-kinesin ATPase superfamily. Myosin family. Plant myosin class XI subfamily. Homodimer. Interacts with MYOB1, MYOB2 and MYOB3. Interacts with PHOX1 and PHOX2. As to expression, expressed ubiquitously.

The protein resides in the cytoplasm. Myosin heavy chain that is required for the cell cycle-regulated transport of various organelles and proteins for their segregation. Functions by binding with its tail domain to receptor proteins on organelles and exerting force with its N-terminal motor domain against actin filaments, thereby transporting its cargo along polarized actin cables. Involved in the tip growth of root hair cells and in the elongation of trichome stalk and branches. Plays a major role in trafficking of Golgi stacks, mitochondria and peroxisomes during root hair development. Acts as the primary contributor to ER streaming with a major role in the movement of Golgi bodies. Required for development of pavement cells, trichomes, and stigmatic papillae. Together with XI-F, required for the regulation of organ bending, such as gravitropic root bending. The protein is Myosin-17 of Arabidopsis thaliana (Mouse-ear cress).